The sequence spans 514 residues: 2,3-bisphosphoglycerate-independent phosphoglycerate mutase (514 aa).

Aspartate 14 and serine 64 together coordinate Mn(2+). Serine 64 serves as the catalytic Phosphoserine intermediate. Substrate is bound by residues histidine 125, 155–156 (RD), arginine 187, arginine 193, 263–266 (RADR), and lysine 336. Positions 403, 407, 444, 445, and 463 each coordinate Mn(2+).

Belongs to the BPG-independent phosphoglycerate mutase family. Monomer. Mn(2+) is required as a cofactor.

It carries out the reaction (2R)-2-phosphoglycerate = (2R)-3-phosphoglycerate. It functions in the pathway carbohydrate degradation; glycolysis; pyruvate from D-glyceraldehyde 3-phosphate: step 3/5. Catalyzes the interconversion of 2-phosphoglycerate and 3-phosphoglycerate. The protein is 2,3-bisphosphoglycerate-independent phosphoglycerate mutase of Escherichia coli O1:K1 / APEC.